The primary structure comprises 848 residues: ATP-dependent Clp protease ATP-binding subunit ClpC1 (848 aa).

The Clp R domain occupies 2 to 144 (FERFTDRARR…RQQVIQLLSG (143 aa)). Repeat regions lie at residues 5–70 (FTDR…IGQG) and 80–144 (FTPR…LLSG). A UVR domain is found at 425 to 460 (DEKIADARREKESAIDAQDFEKAAALRDKEKQLVAQ). ATP is bound by residues 553–560 (GPSGVGKT) and 617–626 (KPFSVVLFDE). The tract at residues 811 to 848 (GQGEDAKFTFSGGPKRAETAEPDLAGAGAAGAPTAGTE) is disordered. Positions 835-848 (AGAGAAGAPTAGTE) are enriched in low complexity.

Belongs to the ClpA/ClpB family. ClpC subfamily.

Functionally, ATP-dependent specificity component of the Clp protease. It directs the protease to specific substrates. Can perform chaperone functions in the absence of ClpP. Degrades anti-sigma-E factor RseA in the presence of ClpP2. In Mycolicibacterium smegmatis (strain ATCC 700084 / mc(2)155) (Mycobacterium smegmatis), this protein is ATP-dependent Clp protease ATP-binding subunit ClpC1 (clpC1).